The sequence spans 322 residues: Beta-carotene 3-hydroxylase, chloroplastic (322 aa).

A chloroplast-targeting transit peptide spans 1 to 68 (TFHKPVSGAS…AQRCSLVRLR (68 aa)). Transmembrane regions (helical) follow at residues 118–138 (QAAA…ATYL) and 149–169 (AVPW…ALGM). Positions 164–286 (GGALGMEMYA…AHQLHHSGKY (123 aa)) constitute a Fatty acid hydroxylase domain. The Histidine box-1 motif lies at 177–182 (HKAIWH). Residues 191-195 (HKSHH) carry the Histidine box-2 motif. The next 2 helical transmembrane spans lie at 207-227 (LFAI…FWLP) and 231-251 (GAAC…YMFV). Residues 252 to 257 (HDGLVH) carry the Histidine box-3 motif. Residues 278–282 (HQLHH) carry the Histidine box-4 motif.

Belongs to the sterol desaturase family.

Its subcellular location is the plastid. The protein resides in the chloroplast membrane. It catalyses the reaction all-trans-beta-carotene + 4 reduced [2Fe-2S]-[ferredoxin] + 2 O2 + 4 H(+) = all-trans-zeaxanthin + 4 oxidized [2Fe-2S]-[ferredoxin] + 2 H2O. Its function is as follows. Nonheme diiron monooxygenase involved in the biosynthesis of astaxanthin. Hydroxylates beta-ring of beta-carotene and catalyzes the conversion of canthaxanthin to astaxanthin. Uses ferredoxin as an electron donor. This is Beta-carotene 3-hydroxylase, chloroplastic (CRTZ) from Haematococcus lacustris (Green alga).